The primary structure comprises 46 residues: Daisho2 (46 aa).

Positions 1 to 22 (MNCLKICGFFFALIAALATAEA) are cleaved as a signal peptide.

In terms of tissue distribution, hemolymph (at protein level).

It localises to the secreted. Peptide which plays a role in the humoral immune response to a subset of filamentous fungi, including F.oxysporum and F.verticillioides. In Drosophila melanogaster (Fruit fly), this protein is Daisho2.